The primary structure comprises 105 residues: UPF0235 protein Mchl_2407 (105 aa).

The protein belongs to the UPF0235 family.

In Methylorubrum extorquens (strain CM4 / NCIMB 13688) (Methylobacterium extorquens), this protein is UPF0235 protein Mchl_2407.